The primary structure comprises 244 residues: 7-cyano-7-deazaguanine synthase (244 aa).

14–24 contributes to the ATP binding site; the sequence is FSGGQDSATCV. C202, C217, C220, and C223 together coordinate Zn(2+).

The protein belongs to the QueC family. It depends on Zn(2+) as a cofactor.

The catalysed reaction is 7-carboxy-7-deazaguanine + NH4(+) + ATP = 7-cyano-7-deazaguanine + ADP + phosphate + H2O + H(+). The protein operates within purine metabolism; 7-cyano-7-deazaguanine biosynthesis. Functionally, catalyzes the ATP-dependent conversion of 7-carboxy-7-deazaguanine (CDG) to 7-cyano-7-deazaguanine (preQ(0)). In Burkholderia mallei (strain NCTC 10229), this protein is 7-cyano-7-deazaguanine synthase.